The primary structure comprises 266 residues: UPF0294 protein YafD (266 aa).

The protein belongs to the UPF0294 family.

The protein resides in the cytoplasm. This Escherichia coli O157:H7 protein is UPF0294 protein YafD (yafD).